A 176-amino-acid polypeptide reads, in one-letter code: Inorganic pyrophosphatase (176 aa).

3 residues coordinate substrate: lysine 30, arginine 44, and tyrosine 56. 3 residues coordinate Mg(2+): aspartate 66, aspartate 71, and aspartate 103. Tyrosine 142 lines the substrate pocket.

The protein belongs to the PPase family. In terms of assembly, homohexamer. The cofactor is Mg(2+).

Its subcellular location is the cytoplasm. It catalyses the reaction diphosphate + H2O = 2 phosphate + H(+). Catalyzes the hydrolysis of inorganic pyrophosphate (PPi) forming two phosphate ions. In Aeropyrum pernix (strain ATCC 700893 / DSM 11879 / JCM 9820 / NBRC 100138 / K1), this protein is Inorganic pyrophosphatase.